Consider the following 470-residue polypeptide: Tubulin gamma chain (470 aa).

144–150 serves as a coordination point for GTP; sequence AGGTGSG.

This sequence belongs to the tubulin family.

The protein localises to the cytoplasm. The protein resides in the cytoskeleton. Its subcellular location is the microtubule organizing center. It is found in the spindle pole body. In terms of biological role, tubulin is the major constituent of microtubules. The gamma chain is found at microtubule organizing centers (MTOC) such as the spindle poles or the centrosome, suggesting that it is involved in the minus-end nucleation of microtubule assembly. The protein is Tubulin gamma chain (TUB4) of Eremothecium gossypii (strain ATCC 10895 / CBS 109.51 / FGSC 9923 / NRRL Y-1056) (Yeast).